We begin with the raw amino-acid sequence, 198 residues long: Calcium channel flower (198 aa).

Helical transmembrane passes span 36–56 (LGIV…LSII), 67–89 (IIQM…VCIE), and 114–134 (AVPP…GLIF).

Belongs to the calcium channel flower family. In terms of assembly, homomultimer. Associates with the dally/ magu complex.

It localises to the cell membrane. The protein resides in the cytoplasmic vesicle. Its subcellular location is the secretory vesicle. The protein localises to the synaptic vesicle membrane. It is found in the presynaptic cell membrane. It localises to the endosome. Its activity is regulated as follows. Channel activity is inhibited by La(3+), which reduces Ca(2+) influx and thus inhibits it's function in promoting activity-dependent bulk endocytosis (ADBE) in response to high stimuli. Functionally, transmembrane protein which mediates synaptic endocytosis, fitness-based cell culling, neuronal culling, morphogen gradient scaling, and calcium transport. Regulates synaptic endocytosis and hence couples exo- with endocytosis. Controls two major modes of synaptic vesicle (SV) endocytosis in the synaptic boutons of neuromuscular junctions (NMJs); Ca(2+) channel-independent Clathrin-mediated endocytosis (CME) in response to mild stimulation, and Ca(2+) channel-dependent activity-dependent bulk endocytosis (ADBE) in response to strong stimulation. Functions in ADBE and subsequent SV reformation from bulk endosomes by initiating Ca(2+) channel-dependent phosphatidylinositol 4,5-bisphosphate (PtdIns(4,5)P2) compartmentalization in synaptic boutons. There it acts at the periactive zone to provide the low Ca(2+) levels required to initiate Calcineurin activation and upregulate PtdIns(4,5)P2. Conversely PtdIns(4,5)P2 enhances fwe Ca(2+) channel-activity, establishing a positive feedback loop that induces PtdIns(4,5)P2 microdomain at the periactive zone. These microdomains trigger bulk membrane invagination (i.e. ADBE) by triggering actin polymerization while also promoting localization of fwe to bulk endosomes, thereby removing the ADBE trigger to reduce endocytosis and prevent excess membrane uptake. PtdIns(4,5)P2 then promotes SV reformation from the bulk endosomes, to coordinate ADBE and subsequent SV reformation. Different combinations of the flower isoforms at the cell membrane are also required for the identification and elimination of suboptimal or supernumerary cells during development, regeneration, and adulthood. Required for the recognition and elimination of unfit cells in the developing wing during cell competition. In the developing pupal retina, mediates the elimination of unwanted postmitotic neurons, including supernumerary photoreceptor neurons that form at the periphery of the retina and are contained within incomplete ommatidia units. Also required for efficient elimination and replacement of old neurons by newly generated neurons during regeneration in the adult brain following mechanical injury. Downstream of the flower fitness fingerprints, cells identified as unwanted or unfit are eliminated via apoptosis through the expression of ahuizotl (azot). However, the cells marked for elimination by the flower isoforms only undergo apoptosis if additional thresholds are met; (1) their neighboring fit/healthy cells express different levels of the fwe isoforms, and (2) the levels of the protective signal SPARC expressed by the loser or unwanted cells are unable to inhibit caspase activation. These additional thresholds for flower-mediated apoptosis, allows useful cells to recover from transient and limited stress before they are unnecessarily eliminated. Functions with dally and magu in a mechanism of scaling, which utilises apoptosis to ensure that the dpp morphogen gradient, which mediates organ growth, remains proportional to the size of the growing wing. In this mechanism, fwe represses dally- and Magu-dependent activity in expanding the gradient, and dally/Magu inhibits fwe-dependent apoptosis to keep cell death rate low. When the levels of these different proteins are optimally regulated the gradient correctly scales with organ growth but when this fails, fwe-mediated apoptosis is activated to trim the developing tissue to match the correct size of the gradient. The sequence is that of Calcium channel flower from Drosophila persimilis (Fruit fly).